A 156-amino-acid chain; its full sequence is Iron sulfur cluster assembly protein 2, mitochondrial (156 aa).

A mitochondrion-targeting transit peptide spans 1–26 (MFARLANPAHFKPLTGSHITRAAKRL).

It belongs to the NifU family. Component of the core Fe-S cluster (ISC) assembly machinery. Interacts with frataxin. Interacts with the mitochondrial co-chaperones JAC1 and SSQ1. Interacts with NFS1. Interacts with ferredoxin YAH1; interacts with the reduced form. Requires [2Fe-2S] cluster as cofactor.

Its subcellular location is the mitochondrion matrix. It participates in cofactor biosynthesis; iron-sulfur cluster biosynthesis. Its function is as follows. Scaffold protein for the de novo synthesis of iron-sulfur (Fe-S) clusters within mitochondria, which is required for maturation of both mitochondrial and cytoplasmic [2Fe-2S] and [4Fe-4S] proteins. First, a [2Fe-2S] cluster is transiently assembled on the scaffold proteins ISU1 and ISU2. In a second step, the cluster is released from ISU1/ISU2, transferred to glutaredoxin GRX5, followed by the formation of mitochondrial [2Fe-2S] proteins, the synthesis of [4Fe-4S] clusters and their target-specific insertion into the recipient apoproteins. Cluster assembly on ISU1/ISU2 depends on the function of the cysteine desulfurase complex NFS1-ISD11, which serves as the sulfur donor for cluster synthesis, the iron-binding protein frataxin (YFH1) as the putative iron donor, and the electron transfer chain comprised of ferredoxin reductase ARH1 and ferredoxin YAH1, which receive their electrons from NADH. Fe-S cluster release from ISU1/ISU2 is achieved by interaction with the Hsp70 chaperone SSQ1, assisted by the DnaJ-like co-chaperone JAC1 and the nucleotide exchange factor MGE1. ISU1 is the major isoform in yeast, while ISU2 is not detectable in cells grown to stationary phase. Also involved in production of a sulfur precursor required for thiolation of cytoplasmic tRNAs. In Saccharomyces cerevisiae (strain ATCC 204508 / S288c) (Baker's yeast), this protein is Iron sulfur cluster assembly protein 2, mitochondrial.